Consider the following 111-residue polypeptide: Urease subunit beta (111 aa).

Belongs to the urease beta subunit family. In terms of assembly, heterotrimer of UreA (gamma), UreB (beta) and UreC (alpha) subunits. Three heterotrimers associate to form the active enzyme.

Its subcellular location is the cytoplasm. The catalysed reaction is urea + 2 H2O + H(+) = hydrogencarbonate + 2 NH4(+). The protein operates within nitrogen metabolism; urea degradation; CO(2) and NH(3) from urea (urease route): step 1/1. The sequence is that of Urease subunit beta from Psychrobacter cryohalolentis (strain ATCC BAA-1226 / DSM 17306 / VKM B-2378 / K5).